The sequence spans 197 residues: Probable GTP-binding protein EngB (197 aa).

The EngB-type G domain maps to 22–194; that stretch reads DLPEIAFAGR…LETIARMTGI (173 aa). Residues 30–37, 57–61, 75–78, 142–145, and 173–175 contribute to the GTP site; these read GRSNVGKS, GKTRL, DLPG, TKAD, and FST. Positions 37 and 59 each coordinate Mg(2+).

The protein belongs to the TRAFAC class TrmE-Era-EngA-EngB-Septin-like GTPase superfamily. EngB GTPase family. It depends on Mg(2+) as a cofactor.

In terms of biological role, necessary for normal cell division and for the maintenance of normal septation. The polypeptide is Probable GTP-binding protein EngB (Desulfosudis oleivorans (strain DSM 6200 / JCM 39069 / Hxd3) (Desulfococcus oleovorans)).